Here is an 89-residue protein sequence, read N- to C-terminus: Small ribosomal subunit protein uS15 (89 aa).

Belongs to the universal ribosomal protein uS15 family. Part of the 30S ribosomal subunit. Forms a bridge to the 50S subunit in the 70S ribosome, contacting the 23S rRNA.

Its function is as follows. One of the primary rRNA binding proteins, it binds directly to 16S rRNA where it helps nucleate assembly of the platform of the 30S subunit by binding and bridging several RNA helices of the 16S rRNA. In terms of biological role, forms an intersubunit bridge (bridge B4) with the 23S rRNA of the 50S subunit in the ribosome. This is Small ribosomal subunit protein uS15 from Sulfurovum sp. (strain NBC37-1).